Reading from the N-terminus, the 472-residue chain is Zinc finger imprinted 3 (472 aa).

One can recognise a KRAB domain in the interval valine 8–alanine 80. 11 consecutive C2H2-type zinc fingers follow at residues leucine 167 to histidine 189, phenylalanine 195 to histidine 217, tyrosine 223 to histidine 245, tyrosine 251 to histidine 273, tyrosine 279 to histidine 301, phenylalanine 307 to histidine 329, tyrosine 335 to histidine 357, tyrosine 363 to histidine 385, tyrosine 391 to histidine 413, tyrosine 419 to histidine 441, and tyrosine 447 to histidine 470.

The protein belongs to the krueppel C2H2-type zinc-finger protein family.

It is found in the nucleus. Functionally, may be involved in transcriptional regulation. The sequence is that of Zinc finger imprinted 3 (ZIM3) from Homo sapiens (Human).